The chain runs to 502 residues: Glycerol kinase (502 aa).

An ADP-binding site is contributed by Thr-14. ATP-binding residues include Thr-14, Thr-15, and Ser-16. Thr-14 lines the sn-glycerol 3-phosphate pocket. Residue Arg-18 participates in ADP binding. Sn-glycerol 3-phosphate is bound by residues Arg-84, Glu-85, and Tyr-136. The glycerol site is built by Arg-84, Glu-85, and Tyr-136. Phosphohistidine; by HPr is present on His-232. Asp-246 is a sn-glycerol 3-phosphate binding site. 2 residues coordinate glycerol: Asp-246 and Gln-247. ADP-binding residues include Thr-268 and Gly-311. ATP contacts are provided by Thr-268, Gly-311, Gln-315, and Gly-412. ADP contacts are provided by Gly-412 and Asn-416.

The protein belongs to the FGGY kinase family. As to quaternary structure, homotetramer and homodimer (in equilibrium). Post-translationally, the phosphoenolpyruvate-dependent sugar phosphotransferase system (PTS), including enzyme I, and histidine-containing protein (HPr) are required for the phosphorylation, which leads to the activation of the enzyme.

The catalysed reaction is glycerol + ATP = sn-glycerol 3-phosphate + ADP + H(+). It functions in the pathway polyol metabolism; glycerol degradation via glycerol kinase pathway; sn-glycerol 3-phosphate from glycerol: step 1/1. Activated by phosphorylation and inhibited by fructose 1,6-bisphosphate (FBP). Key enzyme in the regulation of glycerol uptake and metabolism. Catalyzes the phosphorylation of glycerol to yield sn-glycerol 3-phosphate. In Streptococcus pneumoniae (strain ATCC 700669 / Spain 23F-1), this protein is Glycerol kinase.